The following is a 58-amino-acid chain: Large ribosomal subunit protein uL30 (58 aa).

The protein belongs to the universal ribosomal protein uL30 family. As to quaternary structure, part of the 50S ribosomal subunit.

The chain is Large ribosomal subunit protein uL30 from Parabacteroides distasonis (strain ATCC 8503 / DSM 20701 / CIP 104284 / JCM 5825 / NCTC 11152).